The following is a 405-amino-acid chain: Imidazolonepropionase (405 aa).

Fe(3+) contacts are provided by H70 and H72. Zn(2+)-binding residues include H70 and H72. Residues R79, Y142, and H175 each contribute to the 4-imidazolone-5-propanoate site. An N-formimidoyl-L-glutamate-binding site is contributed by Y142. H240 serves as a coordination point for Fe(3+). H240 is a binding site for Zn(2+). Q243 contributes to the 4-imidazolone-5-propanoate binding site. Position 315 (D315) interacts with Fe(3+). D315 is a binding site for Zn(2+). N-formimidoyl-L-glutamate-binding residues include N317 and G319. T320 lines the 4-imidazolone-5-propanoate pocket.

It belongs to the metallo-dependent hydrolases superfamily. HutI family. Zn(2+) serves as cofactor. It depends on Fe(3+) as a cofactor.

Its subcellular location is the cytoplasm. It carries out the reaction 4-imidazolone-5-propanoate + H2O = N-formimidoyl-L-glutamate. Its pathway is amino-acid degradation; L-histidine degradation into L-glutamate; N-formimidoyl-L-glutamate from L-histidine: step 3/3. Catalyzes the hydrolytic cleavage of the carbon-nitrogen bond in imidazolone-5-propanoate to yield N-formimidoyl-L-glutamate. It is the third step in the universal histidine degradation pathway. The chain is Imidazolonepropionase from Ectopseudomonas mendocina (strain ymp) (Pseudomonas mendocina).